The chain runs to 453 residues: Sialic acid-binding Ig-like lectin 6 (453 aa).

An N-terminal signal peptide occupies residues 1–26 (MQGAQEASASEMLPLLLPLLWAGALA). The Extracellular portion of the chain corresponds to 27 to 347 (QERRFQLEGP…WKPEGRAGGV (321 aa)). Residues 28-123 (ERRFQLEGPE…RDNAAYFFRL (96 aa)) enclose the Ig-like V-type domain. 3 cysteine pairs are disulfide-bonded: Cys-46–Cys-172, Cys-51–Cys-104, and Cys-166–Cys-215. N-linked (GlcNAc...) asparagine glycosylation occurs at Asn-103. N-acetylneuraminate is bound at residue Arg-122. The region spanning 148 to 231 (PNISIPGTLE…AGVTMERTIQ (84 aa)) is the Ig-like C2-type 1 domain. Residues Asn-149 and Asn-163 are each glycosylated (N-linked (GlcNAc...) asparagine). Asn-233 carries N-linked (GlcNAc...) asparagine glycosylation. Positions 238-333 (PQKVAISIFQ…PLGSLQISLS (96 aa)) constitute an Ig-like C2-type 2 domain. Cys-274 and Cys-319 form a disulfide bridge. A helical membrane pass occupies residues 348–368 (LGAVWGASITTLVFLCVCFIF). Residues 369–453 (RVKTRRKKAA…TEYSEIKIHK (85 aa)) lie on the Cytoplasmic side of the membrane. Positions 424-429 (LHYAVL) match the ITIM motif motif. Residues 444–449 (TEYSEI) carry the SLAM-like motif motif.

It belongs to the immunoglobulin superfamily. SIGLEC (sialic acid binding Ig-like lectin) family. In terms of assembly, interacts with LEP. In terms of tissue distribution, expressed at high levels in placenta (cyto- and syncytiotrophoblastic cells) and at lower levels in spleen, peripheral blood leukocytes (predominantly B-cells) and small intestine.

It is found in the cell membrane. The protein localises to the secreted. Putative adhesion molecule that mediates sialic-acid dependent binding to cells. Binds to alpha-2,6-linked sialic acid. The sialic acid recognition site may be masked by cis interactions with sialic acids on the same cell surface. This Homo sapiens (Human) protein is Sialic acid-binding Ig-like lectin 6 (SIGLEC6).